We begin with the raw amino-acid sequence, 142 residues long: Galactose-6-phosphate isomerase subunit LacA (142 aa).

This sequence belongs to the LacAB/RpiB family. In terms of assembly, heteromultimeric protein consisting of LacA and LacB.

It catalyses the reaction aldehydo-D-galactose 6-phosphate = keto-D-tagatose 6-phosphate. Its pathway is carbohydrate metabolism; D-galactose 6-phosphate degradation; D-tagatose 6-phosphate from D-galactose 6-phosphate: step 1/1. The polypeptide is Galactose-6-phosphate isomerase subunit LacA (Clostridium acetobutylicum (strain ATCC 824 / DSM 792 / JCM 1419 / IAM 19013 / LMG 5710 / NBRC 13948 / NRRL B-527 / VKM B-1787 / 2291 / W)).